Consider the following 62-residue polypeptide: uncharacterized protein (62 aa).

It is found in the mitochondrion. This is an uncharacterized protein from Marchantia polymorpha (Common liverwort).